The primary structure comprises 250 residues: 3-deoxy-manno-octulosonate cytidylyltransferase (250 aa).

The protein belongs to the KdsB family.

The protein localises to the cytoplasm. The enzyme catalyses 3-deoxy-alpha-D-manno-oct-2-ulosonate + CTP = CMP-3-deoxy-beta-D-manno-octulosonate + diphosphate. It participates in nucleotide-sugar biosynthesis; CMP-3-deoxy-D-manno-octulosonate biosynthesis; CMP-3-deoxy-D-manno-octulosonate from 3-deoxy-D-manno-octulosonate and CTP: step 1/1. Its pathway is bacterial outer membrane biogenesis; lipopolysaccharide biosynthesis. Activates KDO (a required 8-carbon sugar) for incorporation into bacterial lipopolysaccharide in Gram-negative bacteria. This is 3-deoxy-manno-octulosonate cytidylyltransferase from Cytophaga hutchinsonii (strain ATCC 33406 / DSM 1761 / CIP 103989 / NBRC 15051 / NCIMB 9469 / D465).